The chain runs to 1733 residues: MKKRRQGPINKRVDFLSNKVNKYSIRKFTVGTASILVGATLMFGAADNEAKAAEDNQLESASKEEQKGSRDNENSKLNQVDLDNGSHSSEKTTNVNNATEVKKVEAPTTSDVSKPKANEAVVTNESTKPKTTEAPTVNEESIAETPKTSTTQQDSTEKNNPSLKDNLNSSSTTSKESKTDEHSTKQAQMSTNKSNLDTNDSPTQSEKTSSQANNDSTDNQSAPSKQLDSKPSEQKVYKTKFNDEPTQDVEHTTTKLKTPSVSTDSSVNDKQDYTRSAVASLGVDSNETEAITNAVRDNLDLKAASREQINEAIIAEALKKDFSNPDYGVDTPLALNRSQSKNSPHKSASPRMNLMSLAAEPNSGKNVNDKVKITNPTLSLNKSNNHANNVIWPTSNEQFNLKANYELDDSIKEGDTFTIKYGQYIRPGGLELPAIKTQLRSKDGSIVANGVYDKTTNTTTYTFTNYVDQYQNITGSFDLIATPKRETAIKDNQNYPMEVTIANEVVKKDFIVDYGNKKDNTTTAAVANVDNVNNKHNEVVYLNQNNQNPKYAKYFSTVKNGEFIPGEVKVYEVTDTNAMVDSFNPDLNSSNVKDVTSQFAPKVSADGTRVDINFARSMANGKKYIVTQAVRPTGTGNVYTEYWLTRDGTTNTNDFYRGTKSTTVTYLNGSSTAQGDNPTYSLGDYVWLDKNKNGVQDDDEKGLAGVYVTLKDSNNRELQRVTTDQSGHYQFDNLQNGTYTVEFAIPDNYTPSPANNSTNDAIDSDGERDGTRKVVVAKGTINNADNMTVDTGFYLTPKYNVGDYVWEDTNKDGIQDDNEKGISGVKVTLKNKNGDTIGTTTTDSNGKYEFTGLENGDYTIEFETPEGYTPTKQNSGSDEGKDSNGTKTTVTVKDADNKTIDSGFYKPTYNLGDYVWEDTNKDGIQDDSEKGISGVKVTLKDKNGNAIGTTTTDASGHYQFKGLENGSYTVEFETPSGYTPTKANSGQDITVDSNGITTTGIINGADNLTIDSGFYKTPKYSVGDYVWEDTNKDGIQDDNEKGISGVKVTLKDEKGNIISTTTTDENGKYQFDNLDSGNYIIHFEKPEGMTQTTANSGNDDEKDADGEDVRVTITDHDDFSIDNGYFDDDSDSDSDADSDSDSDSDSDADSDSDADSDSDADSDSDSDSDSDADSDSDSDSDSDSDSDSDADSDSDSDSDSDADSDSDSDSDSDSDSDSDSDSDSDSDSDSDSDSDSDSDSDSDSDADSDSDADSDSDSDSDSDADSDSDSDSDSDADSDSDSDSDSDSDSDSDADSDSDSDSDSDSDSDSDSDSDSDSDSDSDADSDSDSDSDSDSDSDSDSDSDSDSDSDSDADSDADSDSDADSDSDADSDSDSDSDSDADSDSDSDSDSDSDSDSDSDSDSDSDSDSDSDSDSDADSDSDSDSDSDSDSDSDADSDSDSDSDSDADSDSDSDSDSDADSDSDSDSDSDADSDSDSDSDSDSDSDSDADSDSDSDSDSDSDSDSDSDSDSDSDSDSDSDSDSDSDSDSDSDSDSDSDSDSDSDSDSDSDSDSDSDSDSDSDSDSDSDSDSDSDSDSDSDSDSDSDSDSDSDSDSDSDSDSDSDSDSDSDSDSDSDSDSDADSDSDSDSDSDADSDSDSDSDSDSDSDSDSDSDSDSDSDSDSDSDSDSDSDSDSDSDSDSDSDSDKNAKDKLPDTGANEDHDSKGTLLGTLFAGLGALLLGRRRKKDNKEK.

The first 45 residues, 1-45 (MKKRRQGPINKRVDFLSNKVNKYSIRKFTVGTASILVGATLMFGA), serve as a signal peptide directing secretion. Positions 46 to 678 (ADNEAKAAED…GSSTAQGDNP (633 aa)) are ligand binding A region. 2 disordered regions span residues 51–269 (KAAE…SVND) and 332–351 (PLALNRSQSKNSPHKSASPR). Over residues 61-74 (ASKEEQKGSRDNEN) the composition is skewed to basic and acidic residues. Composition is skewed to polar residues over residues 85 to 99 (GSHSSEKTTNVNNAT) and 146 to 168 (PKTSTTQQDSTEKNNPSLKDNLN). Basic and acidic residues predominate over residues 175–184 (KESKTDEHST). Positions 186 to 226 (QAQMSTNKSNLDTNDSPTQSEKTSSQANNDSTDNQSAPSKQ) are enriched in polar residues. Residues 227 to 253 (LDSKPSEQKVYKTKFNDEPTQDVEHTT) show a composition bias toward basic and acidic residues. Composition is skewed to polar residues over residues 255 to 266 (KLKTPSVSTDSS) and 336 to 346 (NRSQSKNSPHK). CNA-B domains lie at 679 to 797 (TYSL…YLTP), 798 to 907 (KYNV…FYKP), 908 to 1018 (TYNL…YKTP), and 1019 to 1129 (KYSV…FDDD). Residues 679 to 1129 (TYSLGDYVWL…SIDNGYFDDD (451 aa)) form a type I collagen binding region region. The tract at residues 862–890 (FETPEGYTPTKQNSGSDEGKDSNGTKTTV) is disordered. The disordered stretch occupies residues 1085 to 1708 (KPEGMTQTTA…ANEDHDSKGT (624 aa)). Residues 1107 to 1119 (EDVRVTITDHDDF) show a composition bias toward basic and acidic residues. Residues 1125-1684 (YFDDDSDSDS…DSDSDSDSDS (560 aa)) show a composition bias toward acidic residues. The span at 1685 to 1706 (DSDKNAKDKLPDTGANEDHDSK) shows a compositional bias: basic and acidic residues. Residues 1694-1698 (LPDTG) carry the LPXTG sorting signal motif. The residue at position 1697 (T1697) is a Pentaglycyl murein peptidoglycan amidated threonine. The propeptide at 1698–1733 (GANEDHDSKGTLLGTLFAGLGALLLGRRRKKDNKEK) is removed by sortase.

It belongs to the serine-aspartate repeat-containing protein (SDr) family.

It localises to the secreted. It is found in the cell wall. Functionally, binds to type I collagen via alpha-2(I) or alpha-1(I) chains, although its affinity for the alpha-1(I) chain is significantly higher. Involved in bacterial adherence to transcutaneous drivelines from explanted ventricular assist devices. The protein is Serine-aspartate repeat-containing protein F (sdrF) of Staphylococcus epidermidis.